Reading from the N-terminus, the 421-residue chain is MSNLTEERWVAADLRAPLTPAGRTVVDLLAGVIPRISAEAADRDRTGTFPVEAFEQFAKLGLMGATVPAELGGLGLTRLYDVATALMRLAEADASTALAWHVQLSRGLTLTYEWQHGTPPVRAMAERLLRAMAEGEAAVCGALKDAPGVVTELHSDGAGGWLLSGRKVLVSMAPIATHFFVHAQRRDDDGSVFLAVPVVHRDAPGLTVLDNWDGLGMRASGTLEVVFDRCPVRADELLERGPVGARRDAVLAGQTVSSITMLGIYAGIAQAARDIAVGFCAGRGGEPRAGARALVAGLDTRLYALRTTVGAALTNADAASVDLSGDPDERGRRMMTPFQYAKMTVNELAPAVVDDCLSLVGGLAYTAGHPLSRLYRDVRAGGFMQPYSYVDAVDYLSGQALGLDRDNDYMSVRALRSRTSA.

It belongs to the acyl-CoA dehydrogenase family. Homotetramer. The cofactor is FAD.

The enzyme catalyses dTDP-beta-L-evernosamine + 2 NADPH + 2 O2 + H(+) = dTDP-2,3,6-trideoxy-3-C-methyl-4-O-methyl-3-nitroso-beta-L-arabino-hexopyranose + 2 NADP(+) + 3 H2O. It catalyses the reaction dTDP-beta-L-evernosamine + NADPH + O2 = dTDP-N-hydroxy-beta-L-evernosamine + NADP(+) + H2O. The catalysed reaction is dTDP-N-hydroxy-beta-L-evernosamine + NADPH + O2 + H(+) = dTDP-2,3,6-trideoxy-3-C-methyl-4-O-methyl-3-nitroso-beta-L-arabino-hexopyranose + NADP(+) + 2 H2O. The protein operates within antibiotic biosynthesis. Its function is as follows. Nitrososynthase involved in the biosynthesis of everninomicin, a broad spectrum orthosomycin antibiotic. Catalyzes the double-oxidation of TDP-L-evernosamine to TDP-L-evernitrosose. The enzyme first oxidizes the substrate to a transient hydroxylamino intermediate, which is then further oxidized to nitroso sugar. The nitroso group is probably spontaneously oxidized giving TDP-L-evernitrose. In vitro, catalyzes the double-oxidation of TDP-L-epi-vancosamine to TDP-L-epi-vancosonitrose. Can also use biosynthetic progenitors of TDP-L-epi-vancosamine, but progenitors solely undergo single-oxidation reactions and terminate in the hydroxylamine oxidation state. In Micromonospora sp. (strain ATCC 39149 / NRRL 15099 / SCC 1413), this protein is L-evernosamine nitrososynthase.